We begin with the raw amino-acid sequence, 82 residues long: Small ribosomal subunit protein eS27B (82 aa).

The segment at 37–59 (CPGCLNITTVFSHAQTAVTCESC) adopts a C4-type zinc-finger fold.

It belongs to the eukaryotic ribosomal protein eS27 family. Component of the small ribosomal subunit (SSU). Mature yeast ribosomes consist of a small (40S) and a large (60S) subunit. The 40S small subunit contains 1 molecule of ribosomal RNA (18S rRNA) and 33 different proteins (encoded by 57 genes). The large 60S subunit contains 3 rRNA molecules (25S, 5.8S and 5S rRNA) and 46 different proteins (encoded by 81 genes). It depends on Zn(2+) as a cofactor. In terms of processing, the N-terminus is not modified.

The protein resides in the cytoplasm. Functionally, component of the ribosome, a large ribonucleoprotein complex responsible for the synthesis of proteins in the cell. The small ribosomal subunit (SSU) binds messenger RNAs (mRNAs) and translates the encoded message by selecting cognate aminoacyl-transfer RNA (tRNA) molecules. The large subunit (LSU) contains the ribosomal catalytic site termed the peptidyl transferase center (PTC), which catalyzes the formation of peptide bonds, thereby polymerizing the amino acids delivered by tRNAs into a polypeptide chain. The nascent polypeptides leave the ribosome through a tunnel in the LSU and interact with protein factors that function in enzymatic processing, targeting, and the membrane insertion of nascent chains at the exit of the ribosomal tunnel. This is Small ribosomal subunit protein eS27B from Saccharomyces cerevisiae (strain ATCC 204508 / S288c) (Baker's yeast).